The chain runs to 824 residues: MSSLLNFYRKVLNVPLSLLVKSRAIPTDPVKELNLNLEQPIIYVLPYTSQTDLLILQKNCLSLNLPDPLQNNELNGQSLPRYVFLDEGRRFFKSKGAKSETESIFYRYLDLHRNNESLDVQLIPASVLWGRSPGKESEPHLRLMSSFQRIISMIWFGRDNFVRFSQALSLKYMVAEHGADEGIAQKLARVAKIHFAKQRYSAMGPRLPDRQAMFNKIIQSPAIKAAIEEEAKTKKISIEKARQEAEKIVNEIAADVSHESLRIADRVLSWLWNKLYQGINVQNGDRVRKLALEGHEIVYVPCHRSHMDYLLLSYLLYHQGLVPPHIAAGINLNFFPAGPIFRSWGAFFIRRTFKGNRLYSTIFREYLAELFYRGYSVEYFIEGGRSRTGRLLEPKTGMMSMTLQALQRGLTRPISIVPVYIGYEHVLEVDTYAKELRGAEKEKENAGLVLRVIKKLKNLGQCYVNFAEPIQVNNYLNQHFPEWKESQAEDSRPKWLNEAVDSVAHQVMININKAAAINAKNLIGSVLLASRQRALAREQLIEQVDSYLQLFKNVSYSDDVIVPNDSAEEMLNHVLTLPRSGVISEKDSFGEMIRLDRESAVLMTYYRNNIQHLFVLPSLVASIILHHESVSKDLIIKTVNRIYPFLKAELFLHFEENDVRNQVEAILTEFSAQRIVKYESDVLQINRARVRALQLHAAGVREILQRYYISLSILLEHPEISRAALEKESRSIAQRLSILHGINAPEFFDKALFSTFSASLKAQGYFDSEGNCILEKAKEAEEILRSLISVEVQLTIQGAMEKVEEVENTETVVKTAEAVTEKNE.

The HXXXXD motif motif lies at 302–307 (CHRSHM).

It belongs to the GPAT/DAPAT family.

The protein resides in the cell inner membrane. It carries out the reaction sn-glycerol 3-phosphate + an acyl-CoA = a 1-acyl-sn-glycero-3-phosphate + CoA. It functions in the pathway phospholipid metabolism; CDP-diacylglycerol biosynthesis; CDP-diacylglycerol from sn-glycerol 3-phosphate: step 1/3. The protein is Glycerol-3-phosphate acyltransferase of Actinobacillus pleuropneumoniae serotype 3 (strain JL03).